Here is a 165-residue protein sequence, read N- to C-terminus: Phosphopantetheine adenylyltransferase (165 aa).

Ser-10 contributes to the substrate binding site. ATP is bound by residues 10 to 11 (SF) and His-18. Residues Lys-42, Ser-79, and Arg-93 each coordinate substrate. Residues 94–96 (GLR), Glu-104, and 129–135 (VRPITAT) contribute to the ATP site.

Belongs to the bacterial CoaD family. In terms of assembly, homohexamer. The cofactor is Mg(2+).

Its subcellular location is the cytoplasm. It catalyses the reaction (R)-4'-phosphopantetheine + ATP + H(+) = 3'-dephospho-CoA + diphosphate. It functions in the pathway cofactor biosynthesis; coenzyme A biosynthesis; CoA from (R)-pantothenate: step 4/5. In terms of biological role, reversibly transfers an adenylyl group from ATP to 4'-phosphopantetheine, yielding dephospho-CoA (dPCoA) and pyrophosphate. This chain is Phosphopantetheine adenylyltransferase, found in Bradyrhizobium diazoefficiens (strain JCM 10833 / BCRC 13528 / IAM 13628 / NBRC 14792 / USDA 110).